The primary structure comprises 131 residues: Fumarate reductase subunit C (131 aa).

The next 3 membrane-spanning stretches (helical) occupy residues 30 to 50 (EGTA…LFAL), 57 to 77 (WAGF…LITL), and 109 to 129 (IIKS…FVAL).

It belongs to the FrdC family. Part of an enzyme complex containing four subunits: a flavoprotein (FrdA), an iron-sulfur protein (FrdB), and two hydrophobic anchor proteins (FrdC and FrdD).

The protein localises to the cell inner membrane. Two distinct, membrane-bound, FAD-containing enzymes are responsible for the catalysis of fumarate and succinate interconversion; fumarate reductase is used in anaerobic growth, and succinate dehydrogenase is used in aerobic growth. Anchors the catalytic components of the fumarate reductase complex to the cell inner membrane, binds quinones. The chain is Fumarate reductase subunit C from Shigella flexneri.